A 153-amino-acid chain; its full sequence is Large ribosomal subunit protein uL30 (153 aa).

Belongs to the universal ribosomal protein uL30 family. In terms of assembly, part of the 50S ribosomal subunit.

This chain is Large ribosomal subunit protein uL30, found in Methanocorpusculum labreanum (strain ATCC 43576 / DSM 4855 / Z).